The primary structure comprises 69 residues: Metallothionein-like protein CRS5 (69 aa).

This sequence belongs to the metallothionein superfamily. Type 13 family.

Functionally, critical role in copper (specific) homeostasis and detoxification. May protect by directly chelating and sequestering copper ions. The chain is Metallothionein-like protein CRS5 (CRS5) from Saccharomyces cerevisiae (strain RM11-1a) (Baker's yeast).